A 445-amino-acid chain; its full sequence is Tubulin beta-3 chain (445 aa).

8 residues coordinate GTP: Gln-11, Glu-69, Ser-138, Gly-142, Thr-143, Gly-144, Asn-204, and Asn-226. Glu-69 provides a ligand contact to Mg(2+). A disordered region spans residues 425–445 (YQDATAEEYDEEEQDGEEEHD). Acidic residues predominate over residues 429–445 (TAEEYDEEEQDGEEEHD).

Belongs to the tubulin family. Dimer of alpha and beta chains. A typical microtubule is a hollow water-filled tube with an outer diameter of 25 nm and an inner diameter of 15 nM. Alpha-beta heterodimers associate head-to-tail to form protofilaments running lengthwise along the microtubule wall with the beta-tubulin subunit facing the microtubule plus end conferring a structural polarity. Microtubules usually have 13 protofilaments but different protofilament numbers can be found in some organisms and specialized cells. It depends on Mg(2+) as a cofactor.

Its subcellular location is the cytoplasm. It localises to the cytoskeleton. In terms of biological role, tubulin is the major constituent of microtubules, a cylinder consisting of laterally associated linear protofilaments composed of alpha- and beta-tubulin heterodimers. Microtubules grow by the addition of GTP-tubulin dimers to the microtubule end, where a stabilizing cap forms. Below the cap, tubulin dimers are in GDP-bound state, owing to GTPase activity of alpha-tubulin. The chain is Tubulin beta-3 chain (TUBB3) from Zea mays (Maize).